The primary structure comprises 400 residues: Acetate kinase (400 aa).

Mg(2+) is bound at residue asparagine 7. Lysine 14 contacts ATP. Substrate is bound at residue arginine 91. Catalysis depends on aspartate 148, which acts as the Proton donor/acceptor. ATP is bound by residues 208 to 212 (HVGNG), 283 to 285 (DMR), and 331 to 335 (GVGEN). A Mg(2+)-binding site is contributed by glutamate 385.

This sequence belongs to the acetokinase family. Homodimer. It depends on Mg(2+) as a cofactor. Mn(2+) serves as cofactor.

Its subcellular location is the cytoplasm. It carries out the reaction acetate + ATP = acetyl phosphate + ADP. It participates in metabolic intermediate biosynthesis; acetyl-CoA biosynthesis; acetyl-CoA from acetate: step 1/2. Its function is as follows. Catalyzes the formation of acetyl phosphate from acetate and ATP. Can also catalyze the reverse reaction. The polypeptide is Acetate kinase (Parabacteroides distasonis (strain ATCC 8503 / DSM 20701 / CIP 104284 / JCM 5825 / NCTC 11152)).